The following is a 507-amino-acid chain: uncharacterized protein (507 aa).

12 helical membrane-spanning segments follow: residues 11-31 (ILCFFLWQFGLFYACQLIFPI), 97-117 (AWIATIQFIGALVGALVYGHL), 125-145 (PVSFVGISIGIIFGVASGFAP), 149-169 (VFAVLLFICGTSVACIMIVFY), 187-207 (FFNWGYARLVFTLVCFICGYW), 209-229 (SAAIATSLLALPILPVLLWLP), 283-303 (LFSSWPIAYSTIVVGSLWFST), 326-346 (FVQAAAIALSKLSIFLLDLFI), 354-374 (LHQVPQIIMIACYTTIMALMI), 388-408 (LAIIIINIIGTSFIELTWDAC), 423-443 (IGIGTCSLLARIGALLAPQMA), and 452-472 (IPYIIVCSIGIISLLISCFFL).

It belongs to the major facilitator superfamily.

It is found in the membrane. This is an uncharacterized protein from Caenorhabditis elegans.